The primary structure comprises 432 residues: MDHSMSKKLHDEALLHIVGGVNSPSRSNKGVGGGIPVTMERASGAYFYDVDGNKYIDYLAAFGPIITGHAHPHITEAITKAAQNGVLYGTPTKHEITFAKMLKEAIPSLEKVRFTNSGTEAVMTTIRVARAYTGRDKIIKFAGCYHGHFDLVLVEAGSGPSTLGIPDSAGVTKSTAEEVITVPFNDLDSFKEALAIWGDQVAAVLVEPIVGNFGMVAPEDGFLEAVNELAHVNGSLVIYDEVITAFRFMYGGAQNYLGVIPDLTAMGKIIGGGLPIGAYGGRIDIMEKVAPLGPAYQAGTHAGNPASILSGIACLEVLQEEGLYERFEKYGSMLKDGIEKAAAKHNIAVTVNQIVGALTVYFTEDPVTNYAEAGATNGELFGRFFKGMLEEGINLAPSKYEAWFITSAHSEADILETIQAVDTVFGKMVQDN.

K268 carries the post-translational modification N6-(pyridoxal phosphate)lysine.

This sequence belongs to the class-III pyridoxal-phosphate-dependent aminotransferase family. HemL subfamily. As to quaternary structure, homodimer. Requires pyridoxal 5'-phosphate as cofactor.

It is found in the cytoplasm. The catalysed reaction is (S)-4-amino-5-oxopentanoate = 5-aminolevulinate. Its pathway is porphyrin-containing compound metabolism; protoporphyrin-IX biosynthesis; 5-aminolevulinate from L-glutamyl-tRNA(Glu): step 2/2. The chain is Glutamate-1-semialdehyde 2,1-aminomutase 2 from Listeria monocytogenes serovar 1/2a (strain ATCC BAA-679 / EGD-e).